The primary structure comprises 233 residues: Putative N-acetylmannosamine-6-phosphate 2-epimerase (233 aa).

It belongs to the NanE family.

The enzyme catalyses an N-acyl-D-glucosamine 6-phosphate = an N-acyl-D-mannosamine 6-phosphate. It participates in amino-sugar metabolism; N-acetylneuraminate degradation; D-fructose 6-phosphate from N-acetylneuraminate: step 3/5. In terms of biological role, converts N-acetylmannosamine-6-phosphate (ManNAc-6-P) to N-acetylglucosamine-6-phosphate (GlcNAc-6-P). The sequence is that of Putative N-acetylmannosamine-6-phosphate 2-epimerase from Yersinia pseudotuberculosis serotype O:3 (strain YPIII).